Here is a 389-residue protein sequence, read N- to C-terminus: Protein P4 (389 aa).

The protein is Protein P4 of Rice tungro bacilliform virus (isolate Philippines) (RTBV).